We begin with the raw amino-acid sequence, 164 residues long: CASP-like protein 1C1 (164 aa).

Residues 1–7 (MVKLTKR) lie on the Cytoplasmic side of the membrane. A helical membrane pass occupies residues 8–28 (IGGLVLRLAAFGAALAALIVM). Topologically, residues 29–51 (ITSRERASFLAISLEAKYTDMAA) are extracellular. The helical transmembrane segment at 52–72 (FKYFVIANAVVSVYSFLVLFL) threads the bilayer. Over 73–80 (PKESLLWK) the chain is Cytoplasmic. A helical membrane pass occupies residues 81–101 (FVVVLDLVMTMLLTSSLSAAL). The Extracellular segment spans residues 102–129 (AVAQVGKKGNANAGWLPICGQVPKFCDQ). The helical transmembrane segment at 130-150 (ITGALIAGFVALVLYVLLLLY) threads the bilayer. Residues 151-164 (SLHAVVDPFLLQKS) are Cytoplasmic-facing.

The protein belongs to the Casparian strip membrane proteins (CASP) family. As to quaternary structure, homodimer and heterodimers. As to expression, expressed in the stele of the root.

It localises to the cell membrane. This Arabidopsis thaliana (Mouse-ear cress) protein is CASP-like protein 1C1.